The following is a 114-amino-acid chain: Large ribosomal subunit protein bL19 (114 aa).

Belongs to the bacterial ribosomal protein bL19 family.

In terms of biological role, this protein is located at the 30S-50S ribosomal subunit interface and may play a role in the structure and function of the aminoacyl-tRNA binding site. The sequence is that of Large ribosomal subunit protein bL19 (rplS) from Listeria innocua serovar 6a (strain ATCC BAA-680 / CLIP 11262).